A 354-amino-acid polypeptide reads, in one-letter code: Ferrochelatase (354 aa).

Residues H214 and E295 each coordinate Fe cation.

The protein belongs to the ferrochelatase family.

It is found in the cytoplasm. It carries out the reaction heme b + 2 H(+) = protoporphyrin IX + Fe(2+). The protein operates within porphyrin-containing compound metabolism; protoheme biosynthesis; protoheme from protoporphyrin-IX: step 1/1. Its function is as follows. Catalyzes the ferrous insertion into protoporphyrin IX. This chain is Ferrochelatase, found in Burkholderia cenocepacia (strain HI2424).